The sequence spans 798 residues: Ubiquitin carboxyl-terminal hydrolase 10 (798 aa).

N-acetylalanine is present on Ala2. The segment at 2–100 (ALHSPQYIFG…ILGCTASKIT (99 aa)) is interaction with p53/TP53. Residues 6–21 (PQYIFGDFSPDEFNQF) form a G3BP1-binding region. At Thr24 the chain carries Phosphothreonine. Thr42 carries the phosphothreonine; by ATM modification. Position 100 is a phosphothreonine (Thr100). 3 disordered regions span residues 139–166 (GVSG…LKDG), 194–257 (AEFM…CFPA), and 307–337 (TESI…LPVS). A compositionally biased stretch (polar residues) spans 205 to 219 (TPRTCNSPQNSTDSV). Phosphoserine is present on residues Ser211 and Ser226. The segment covering 307–316 (TESIDLDPTK) has biased composition (basic and acidic residues). Phosphoserine is present on Ser321. Residues 328-337 (GSASGTLPVS) show a composition bias toward polar residues. Residue Ser337 is modified to Phosphoserine; by ATM. Residues Ser365 and Ser370 each carry the phosphoserine modification. One can recognise a USP domain in the interval 415 to 795 (RGLINKGNWC…TAYLLYYRRV (381 aa)). The active-site Nucleophile is the Cys424. The residue at position 547 (Ser547) is a Phosphoserine. Polar residues predominate over residues 551 to 562 (EKLTISNGPKNH). A disordered region spans residues 551 to 594 (EKLTISNGPKNHSVNEEEQEEQGEGSEDEWEQVGPRNKTSVTRQ). Phosphoserine is present on residues Ser563 and Ser576. Over residues 566 to 581 (EEEQEEQGEGSEDEWE) the composition is skewed to acidic residues. The active-site Proton acceptor is the His749.

This sequence belongs to the peptidase C19 family. USP10 subfamily. As to quaternary structure, found in a deubiquitination complex with TANK, USP10 and ZC3H12A; this complex inhibits genotoxic stress- or interleukin-1-beta (IL1B)-mediated NF-kappa-B activation by promoting IKBKG or TRAF6 deubiquitination. Interacts with IKBKG; this interaction increases in response to DNA damage. Interacts with TANK; this interaction increases in response to DNA damage. Interacts with TRAF6; this interaction increases in response to DNA damage. Interacts with ZC3H12A; this interaction increases in response to DNA damage. Interacts with G3BP1 (via NTF2 domain) and G3BP2 (via NTF2 domain); inhibiting stress granule formation. In terms of processing, phosphorylated by ATM following DNA damage, leading to stabilization and translocation it to the nucleus. Post-translationally, ubiquitinated. Deubiquitinated by USP13. In terms of tissue distribution, widely expressed.

The protein resides in the cytoplasm. The protein localises to the nucleus. It localises to the early endosome. It catalyses the reaction Thiol-dependent hydrolysis of ester, thioester, amide, peptide and isopeptide bonds formed by the C-terminal Gly of ubiquitin (a 76-residue protein attached to proteins as an intracellular targeting signal).. With respect to regulation, specifically inhibited by spautin-1 (specific and potent autophagy inhibitor-1), a derivative of MBCQ that binds to USP10 and inhibits deubiquitinase activity. Regulated by PIK3C3/VPS34-containing complexes. Functionally, hydrolase that can remove conjugated ubiquitin from target proteins such as p53/TP53, RPS2/us5, RPS3/us3, RPS10/eS10, BECN1, SNX3 and CFTR. Acts as an essential regulator of p53/TP53 stability: in unstressed cells, specifically deubiquitinates p53/TP53 in the cytoplasm, leading to counteract MDM2 action and stabilize p53/TP53. Following DNA damage, translocates to the nucleus and deubiquitinates p53/TP53, leading to regulate the p53/TP53-dependent DNA damage response. Component of a regulatory loop that controls autophagy and p53/TP53 levels: mediates deubiquitination of BECN1, a key regulator of autophagy, leading to stabilize the PIK3C3/VPS34-containing complexes. In turn, PIK3C3/VPS34-containing complexes regulate USP10 stability, suggesting the existence of a regulatory system by which PIK3C3/VPS34-containing complexes regulate p53/TP53 protein levels via USP10 and USP13. Does not deubiquitinate MDM2. Plays a key role in 40S ribosome subunit recycling when a ribosome has stalled during translation: acts both by inhibiting formation of stress granules, which store stalled translation pre-initiation complexes, and mediating deubiquitination of 40S ribosome subunits. Acts as a negative regulator of stress granules formation by lowering G3BP1 and G3BP2 valence, thereby preventing G3BP1 and G3BP2 ability to undergo liquid-liquid phase separation (LLPS) and assembly of stress granules. Promotes 40S ribosome subunit recycling following ribosome dissociation in response to ribosome stalling by mediating deubiquitination of 40S ribosomal proteins RPS2/us5, RPS3/us3 and RPS10/eS10, thereby preventing their degradation by the proteasome. Part of a ribosome quality control that takes place when ribosomes have stalled during translation initiation (iRQC): USP10 acts by removing monoubiquitination of RPS2/us5 and RPS3/us3, promoting 40S ribosomal subunit recycling. Deubiquitinates CFTR in early endosomes, enhancing its endocytic recycling. Involved in a TANK-dependent negative feedback response to attenuate NF-kappa-B activation via deubiquitinating IKBKG or TRAF6 in response to interleukin-1-beta (IL1B) stimulation or upon DNA damage. Deubiquitinates TBX21 leading to its stabilization. Plays a negative role in the RLR signaling pathway upon RNA virus infection by blocking the RIGI-mediated MAVS activation. Mechanistically, removes the unanchored 'Lys-63'-linked polyubiquitin chains of MAVS to inhibit its aggregation, essential for its activation. In Homo sapiens (Human), this protein is Ubiquitin carboxyl-terminal hydrolase 10.